Here is a 347-residue protein sequence, read N- to C-terminus: UDP-3-O-acylglucosamine N-acyltransferase (347 aa).

Residue histidine 240 is the Proton acceptor of the active site.

The protein belongs to the transferase hexapeptide repeat family. LpxD subfamily. Homotrimer.

The catalysed reaction is a UDP-3-O-[(3R)-3-hydroxyacyl]-alpha-D-glucosamine + a (3R)-hydroxyacyl-[ACP] = a UDP-2-N,3-O-bis[(3R)-3-hydroxyacyl]-alpha-D-glucosamine + holo-[ACP] + H(+). Its pathway is bacterial outer membrane biogenesis; LPS lipid A biosynthesis. Functionally, catalyzes the N-acylation of UDP-3-O-acylglucosamine using 3-hydroxyacyl-ACP as the acyl donor. Is involved in the biosynthesis of lipid A, a phosphorylated glycolipid that anchors the lipopolysaccharide to the outer membrane of the cell. The sequence is that of UDP-3-O-acylglucosamine N-acyltransferase from Hydrogenovibrio crunogenus (strain DSM 25203 / XCL-2) (Thiomicrospira crunogena).